The following is a 167-amino-acid chain: Small ribosomal subunit protein uS5 (167 aa).

Residues 12-75 (LQEKLVAVNR…EKARRNIVSV (64 aa)) enclose the S5 DRBM domain.

This sequence belongs to the universal ribosomal protein uS5 family. As to quaternary structure, part of the 30S ribosomal subunit. Contacts proteins S4 and S8.

With S4 and S12 plays an important role in translational accuracy. Its function is as follows. Located at the back of the 30S subunit body where it stabilizes the conformation of the head with respect to the body. The sequence is that of Small ribosomal subunit protein uS5 from Shewanella loihica (strain ATCC BAA-1088 / PV-4).